A 321-amino-acid polypeptide reads, in one-letter code: Cytochrome f (321 aa).

The N-terminal stretch at M1 to N35 is a signal peptide. Heme-binding residues include Y37, C57, C60, and H61. A helical transmembrane segment spans residues V287–K307.

This sequence belongs to the cytochrome f family. The 4 large subunits of the cytochrome b6-f complex are cytochrome b6, subunit IV (17 kDa polypeptide, petD), cytochrome f and the Rieske protein, while the 4 small subunits are PetG, PetL, PetM and PetN. The complex functions as a dimer. The cofactor is heme.

It is found in the plastid. The protein resides in the chloroplast thylakoid membrane. Component of the cytochrome b6-f complex, which mediates electron transfer between photosystem II (PSII) and photosystem I (PSI), cyclic electron flow around PSI, and state transitions. This is Cytochrome f from Cryptomeria japonica (Japanese cedar).